The primary structure comprises 144 residues: Large ribosomal subunit protein uL16 (144 aa).

It belongs to the universal ribosomal protein uL16 family. Part of the 50S ribosomal subunit.

Its function is as follows. Binds 23S rRNA and is also seen to make contacts with the A and possibly P site tRNAs. The chain is Large ribosomal subunit protein uL16 from Novosphingobium aromaticivorans (strain ATCC 700278 / DSM 12444 / CCUG 56034 / CIP 105152 / NBRC 16084 / F199).